The following is a 119-amino-acid chain: Holo-[acyl-carrier-protein] synthase (119 aa).

Positions 5 and 51 each coordinate Mg(2+).

The protein belongs to the P-Pant transferase superfamily. AcpS family. Requires Mg(2+) as cofactor.

The protein resides in the cytoplasm. It carries out the reaction apo-[ACP] + CoA = holo-[ACP] + adenosine 3',5'-bisphosphate + H(+). Its function is as follows. Transfers the 4'-phosphopantetheine moiety from coenzyme A to a Ser of acyl-carrier-protein. This Helicobacter pylori (strain HPAG1) protein is Holo-[acyl-carrier-protein] synthase.